A 119-amino-acid chain; its full sequence is Myohemerythrin-1 (119 aa).

8 residues coordinate Fe cation: histidine 25, histidine 55, asparagine 58, glutamate 59, histidine 74, histidine 78, histidine 107, and aspartate 112.

This sequence belongs to the hemerythrin family. In terms of assembly, monomer. As to expression, muscle.

In terms of biological role, myohemerythrin is an oxygen-binding protein found in the retractor muscles of certain worms. The oxygen-binding site contains two iron atoms. The protein is Myohemerythrin-1 of Phascolopsis gouldii (Peanut worm).